Consider the following 176-residue polypeptide: MRVLGVDPGLTRCGVGVVEGVAGRPLTMRGVGVVRTPADAELGLRLVAIEQGIEQWLDEYRPECVAVERVFSQHNVRTVMGTAQASAVAMLCAARRGIPVALHTPSEVKAAVTGSGRADKAQVGAMVTRLLRLDAPPKPADAADALALAICHIWRAPAQNRLQQAVALHASKGRTA.

Residues Asp7, Glu68, and Asp141 contribute to the active site. The Mg(2+) site is built by Asp7, Glu68, and Asp141.

Belongs to the RuvC family. As to quaternary structure, homodimer which binds Holliday junction (HJ) DNA. The HJ becomes 2-fold symmetrical on binding to RuvC with unstacked arms; it has a different conformation from HJ DNA in complex with RuvA. In the full resolvosome a probable DNA-RuvA(4)-RuvB(12)-RuvC(2) complex forms which resolves the HJ. The cofactor is Mg(2+).

Its subcellular location is the cytoplasm. The enzyme catalyses Endonucleolytic cleavage at a junction such as a reciprocal single-stranded crossover between two homologous DNA duplexes (Holliday junction).. Its function is as follows. The RuvA-RuvB-RuvC complex processes Holliday junction (HJ) DNA during genetic recombination and DNA repair. Endonuclease that resolves HJ intermediates. Cleaves cruciform DNA by making single-stranded nicks across the HJ at symmetrical positions within the homologous arms, yielding a 5'-phosphate and a 3'-hydroxyl group; requires a central core of homology in the junction. The consensus cleavage sequence is 5'-(A/T)TT(C/G)-3'. Cleavage occurs on the 3'-side of the TT dinucleotide at the point of strand exchange. HJ branch migration catalyzed by RuvA-RuvB allows RuvC to scan DNA until it finds its consensus sequence, where it cleaves and resolves the cruciform DNA. This Streptomyces avermitilis (strain ATCC 31267 / DSM 46492 / JCM 5070 / NBRC 14893 / NCIMB 12804 / NRRL 8165 / MA-4680) protein is Crossover junction endodeoxyribonuclease RuvC.